The chain runs to 368 residues: E3 ubiquitin-protein ligase makorin (368 aa).

C3H1-type zinc fingers lie at residues 2–29 and 30–57; these read STKR…HDWN and DQPN…HVKV. Residues 58-81 form a disordered region; it reads SRNPTVAPPPSSSTTTRASSSLQP. Positions 69-78 are enriched in low complexity; that stretch reads SSTTTRASSS. A C3H1-type 3 zinc finger spans residues 147–174; the sequence is PADLPICSFAAGGNCPYGEECPQMHGDL. The interval 175 to 202 is makorin-type Cys-His; sequence CTTCGKMCLHPYRPDEREEHTKLCEKNH. An RING-type zinc finger spans residues 216-274; the sequence is CSVCLDRVLSKPTAAERKFGLLSECDHPFCISCIRNWRNNSPTSGMDVNSALRACPICR. The C3H1-type 4 zinc finger occupies 303–332; it reads KLKSIDCKYFDFGTGTCPFGSSCFYKHAYR.

In terms of tissue distribution, expressed in primary roots and leaves. Detected in vascular bundle tissues.

It catalyses the reaction S-ubiquitinyl-[E2 ubiquitin-conjugating enzyme]-L-cysteine + [acceptor protein]-L-lysine = [E2 ubiquitin-conjugating enzyme]-L-cysteine + N(6)-ubiquitinyl-[acceptor protein]-L-lysine.. It functions in the pathway protein modification; protein ubiquitination. Its function is as follows. E3 ubiquitin ligase catalyzing the covalent attachment of ubiquitin moieties onto substrate proteins. This is E3 ubiquitin-protein ligase makorin (MKRN) from Oryza sativa subsp. japonica (Rice).